Consider the following 113-residue polypeptide: Large ribosomal subunit protein uL22 (113 aa).

The protein belongs to the universal ribosomal protein uL22 family. Part of the 50S ribosomal subunit.

Its function is as follows. This protein binds specifically to 23S rRNA; its binding is stimulated by other ribosomal proteins, e.g. L4, L17, and L20. It is important during the early stages of 50S assembly. It makes multiple contacts with different domains of the 23S rRNA in the assembled 50S subunit and ribosome. In terms of biological role, the globular domain of the protein is located near the polypeptide exit tunnel on the outside of the subunit, while an extended beta-hairpin is found that lines the wall of the exit tunnel in the center of the 70S ribosome. The sequence is that of Large ribosomal subunit protein uL22 from Geobacillus kaustophilus (strain HTA426).